A 277-amino-acid polypeptide reads, in one-letter code: Insulin-induced gene 1 protein (277 aa).

Over Met1–Leu84 the chain is Cytoplasmic. Residues His51–Ala66 are compositionally biased toward low complexity. Positions His51–Gly73 are disordered. The chain crosses the membrane as a helical span at residues Leu85–Ile107. Over Gln108–Ala126 the chain is Lumenal. The helical transmembrane segment at Trp127–Tyr144 threads the bilayer. Residues Pro145–Arg159 are Cytoplasmic-facing. Glycyl lysine isopeptide (Lys-Gly) (interchain with G-Cter in ubiquitin) cross-links involve residues Lys156 and Lys158. Residues Glu160–Asp182 form a helical membrane-spanning segment. Residues Phe183–Asn185 lie on the Lumenal side of the membrane. Residues Asn186–Phe204 traverse the membrane as a helical segment. Residues Asp205–Ser209 are Cytoplasmic-facing. Residue Ser207 is modified to Phosphoserine; by PCK1. The helical transmembrane segment at Gly210–Asn231 threads the bilayer. Residues Gly232–Arg245 are Lumenal-facing. A helical transmembrane segment spans residues Ser246–Gly263. The Cytoplasmic segment spans residues Arg264–Asp277. The KxHxx signature appears at Pro271 to Asp277.

It belongs to the INSIG family. As to quaternary structure, interacts with SCAP; interaction is direct and only takes place in the presence of sterols; it prevents interaction between SCAP and the coat protein complex II (COPII). Associates with the SCAP-SREBP complex (composed of SCAP and SREBF1/SREBP1 or SREBF2/SREBP2); association is mediated via its interaction with SCAP and only takes place in the presence of sterols. Interaction with SCAP is mutually exclusive with PAQR3. Interacts with HMGCR (via its SSD); the interaction, accelerated by sterols, leads to the recruitment of HMGCR to AMFR/gp78 for its ubiquitination by the sterol-mediated ERAD pathway. Interacts with AMFR/gp78 (via its membrane domain); the interaction recruits HMCR at the ER membrane for its ubiquitination and degradation by the sterol-mediated ERAD pathway. Interacts with SOAT2/ACAT2; leading to promote recruitment of AMFR/gp78 and subsequent ubiquitination of SOAT2/ACAT2. Interacts with RNF139. Interacts with RNF145. In terms of processing, phosphorylation at Ser-207 by PCK1 reduces binding to oxysterol, disrupting the interaction between INSIG1 and SCAP, thereby promoting nuclear translocation of SREBP proteins (SREBF1/SREBP1 or SREBF2/SREBP2) and subsequent transcription of downstream lipogenesis-related genes. Ubiquitinated by AMFR/gp78 in response to sterol deprivation, leading to its degradation: when the SCAP-SREBP complex becomes dissociated from INSIG1, INSIG1 is then ubiquitinated and degraded in proteasomes. Although ubiquitination is required for rapid INSIG1 degradation, it is not required for release of the SCAP-SREBP complex. Ubiquitinated by RNF139. Expressed in all tissues tested with highest expression in the liver.

The protein localises to the endoplasmic reticulum membrane. Oxysterol-binding protein that mediates feedback control of cholesterol synthesis by controlling both endoplasmic reticulum to Golgi transport of SCAP and degradation of HMGCR. Acts as a negative regulator of cholesterol biosynthesis by mediating the retention of the SCAP-SREBP complex in the endoplasmic reticulum, thereby blocking the processing of sterol regulatory element-binding proteins (SREBPs) SREBF1/SREBP1 and SREBF2/SREBP2. Binds oxysterol, including 25-hydroxycholesterol, regulating interaction with SCAP and retention of the SCAP-SREBP complex in the endoplasmic reticulum. In presence of oxysterol, interacts with SCAP, retaining the SCAP-SREBP complex in the endoplasmic reticulum, thereby preventing SCAP from escorting SREBF1/SREBP1 and SREBF2/SREBP2 to the Golgi. Sterol deprivation or phosphorylation by PCK1 reduce oxysterol-binding, disrupting the interaction between INSIG1 and SCAP, thereby promoting Golgi transport of the SCAP-SREBP complex, followed by processing and nuclear translocation of SREBF1/SREBP1 and SREBF2/SREBP2. Also regulates cholesterol synthesis by regulating degradation of HMGCR: initiates the sterol-mediated ubiquitin-mediated endoplasmic reticulum-associated degradation (ERAD) of HMGCR via recruitment of the reductase to the ubiquitin ligases AMFR/gp78 and/or RNF139. Also regulates degradation of SOAT2/ACAT2 when the lipid levels are low: initiates the ubiquitin-mediated degradation of SOAT2/ACAT2 via recruitment of the ubiquitin ligases AMFR/gp78. The chain is Insulin-induced gene 1 protein from Homo sapiens (Human).